The primary structure comprises 63 residues: MKAQELRAKTVEELNAELANLAGEQFKLRMQAATGQLQQTHQLKQVRRNIAQVKTVLTEKAGE.

The protein belongs to the universal ribosomal protein uL29 family.

This is Large ribosomal subunit protein uL29 from Mannheimia succiniciproducens (strain KCTC 0769BP / MBEL55E).